A 151-amino-acid polypeptide reads, in one-letter code: 3-dehydroquinate dehydratase (151 aa).

Y26 acts as the Proton acceptor in catalysis. N75, H81, and D88 together coordinate substrate. Catalysis depends on H101, which acts as the Proton donor. Substrate is bound by residues 102–103 (LS) and R112.

The protein belongs to the type-II 3-dehydroquinase family. In terms of assembly, homododecamer.

It catalyses the reaction 3-dehydroquinate = 3-dehydroshikimate + H2O. The protein operates within metabolic intermediate biosynthesis; chorismate biosynthesis; chorismate from D-erythrose 4-phosphate and phosphoenolpyruvate: step 3/7. In terms of biological role, catalyzes a trans-dehydration via an enolate intermediate. This is 3-dehydroquinate dehydratase from Shewanella denitrificans (strain OS217 / ATCC BAA-1090 / DSM 15013).